A 469-amino-acid chain; its full sequence is 3-phosphoshikimate 1-carboxyvinyltransferase (469 aa).

Positions Lys21–Lys45 are disordered. Residues Lys52, Ser53, and Arg57 each contribute to the 3-phosphoshikimate site. Lys52 serves as a coordination point for phosphoenolpyruvate. Phosphoenolpyruvate is bound by residues Gly125 and Arg153. 3-phosphoshikimate is bound by residues Ser199, Gln201, Asp352, and Lys379. Residue Gln201 participates in phosphoenolpyruvate binding. The Proton acceptor role is filled by Asp352. Positions 383 and 426 each coordinate phosphoenolpyruvate.

The protein belongs to the EPSP synthase family. Monomer.

Its subcellular location is the cytoplasm. The catalysed reaction is 3-phosphoshikimate + phosphoenolpyruvate = 5-O-(1-carboxyvinyl)-3-phosphoshikimate + phosphate. It participates in metabolic intermediate biosynthesis; chorismate biosynthesis; chorismate from D-erythrose 4-phosphate and phosphoenolpyruvate: step 6/7. Catalyzes the transfer of the enolpyruvyl moiety of phosphoenolpyruvate (PEP) to the 5-hydroxyl of shikimate-3-phosphate (S3P) to produce enolpyruvyl shikimate-3-phosphate and inorganic phosphate. The polypeptide is 3-phosphoshikimate 1-carboxyvinyltransferase (Bradyrhizobium diazoefficiens (strain JCM 10833 / BCRC 13528 / IAM 13628 / NBRC 14792 / USDA 110)).